A 1207-amino-acid chain; its full sequence is DNA-directed RNA polymerase subunit beta' (1207 aa).

Residues Cys60, Cys62, Cys75, and Cys78 each coordinate Zn(2+). Mg(2+) contacts are provided by Asp449, Asp451, and Asp453. Positions 822, 896, 903, and 906 each coordinate Zn(2+).

This sequence belongs to the RNA polymerase beta' chain family. In terms of assembly, the RNAP catalytic core consists of 2 alpha, 1 beta, 1 beta' and 1 omega subunit. When a sigma factor is associated with the core the holoenzyme is formed, which can initiate transcription. Requires Mg(2+) as cofactor. The cofactor is Zn(2+).

The enzyme catalyses RNA(n) + a ribonucleoside 5'-triphosphate = RNA(n+1) + diphosphate. Its function is as follows. DNA-dependent RNA polymerase catalyzes the transcription of DNA into RNA using the four ribonucleoside triphosphates as substrates. In Staphylococcus saprophyticus subsp. saprophyticus (strain ATCC 15305 / DSM 20229 / NCIMB 8711 / NCTC 7292 / S-41), this protein is DNA-directed RNA polymerase subunit beta'.